The sequence spans 377 residues: Dihydroorotate dehydrogenase (quinone) (377 aa).

FMN contacts are provided by residues 78–82 (AGCDK) and A102. K82 contacts substrate. 127 to 130 (NRLG) provides a ligand contact to substrate. 2 residues coordinate FMN: N159 and N192. Substrate is bound at residue N192. Catalysis depends on S195, which acts as the Nucleophile. A substrate-binding site is contributed by N197. FMN-binding residues include K230 and T258. Residue 259 to 260 (NT) coordinates substrate. FMN is bound by residues G288, G317, and 338–339 (YT).

This sequence belongs to the dihydroorotate dehydrogenase family. Type 2 subfamily. In terms of assembly, monomer. It depends on FMN as a cofactor.

The protein localises to the cell membrane. The catalysed reaction is (S)-dihydroorotate + a quinone = orotate + a quinol. It participates in pyrimidine metabolism; UMP biosynthesis via de novo pathway; orotate from (S)-dihydroorotate (quinone route): step 1/1. In terms of biological role, catalyzes the conversion of dihydroorotate to orotate with quinone as electron acceptor. This Rippkaea orientalis (strain PCC 8801 / RF-1) (Cyanothece sp. (strain PCC 8801)) protein is Dihydroorotate dehydrogenase (quinone).